A 185-amino-acid polypeptide reads, in one-letter code: Elongation factor P (185 aa).

This sequence belongs to the elongation factor P family.

The protein localises to the cytoplasm. It participates in protein biosynthesis; polypeptide chain elongation. In terms of biological role, involved in peptide bond synthesis. Stimulates efficient translation and peptide-bond synthesis on native or reconstituted 70S ribosomes in vitro. Probably functions indirectly by altering the affinity of the ribosome for aminoacyl-tRNA, thus increasing their reactivity as acceptors for peptidyl transferase. The polypeptide is Elongation factor P (Trichormus variabilis (strain ATCC 29413 / PCC 7937) (Anabaena variabilis)).